A 298-amino-acid chain; its full sequence is MTKAVNKSNRTNNTNRKTEFWQKLPIHIAILTIAFIWTLPSLGLFISSLRPRGDMLSTGWWTVFWHPLEITQFYLGNYGDVLRSSGMGEAFLNSLTIAVPATVIPIAIATFAAYAFAWMTFPGRQLLFILVVCLLVVPLQTTLIPVLRVYAQLGLAGTFLGVWLAHTAYGLPLGIYLLRNYIGALPKDLIEAAAVDGASHLKIFTKLIVPLSMPAIASFAVFQFLWVWNDLLVALVYLGGTADVAPVTIQLSNLVGSRGQDWYLLTAGAFISMIVPLMVFFGLQRYFVRGILAGSVKS.

7 helical membrane passes run 26-46 (IHIAILTIAFIWTLPSLGLFI), 97-117 (IAVPATVIPIAIATFAAYAFA), 126-146 (LLFILVVCLLVVPLQTTLIPV), 158-178 (TFLGVWLAHTAYGLPLGIYLL), 207-227 (LIVPLSMPAIASFAVFQFLWV), 231-251 (LLVALVYLGGTADVAPVTIQL), and 263-283 (YLLTAGAFISMIVPLMVFFGL). Residues 91–283 (FLNSLTIAVP…IVPLMVFFGL (193 aa)) enclose the ABC transmembrane type-1 domain.

Belongs to the binding-protein-dependent transport system permease family. As to quaternary structure, the complex is composed of two ATP-binding proteins (GgtA), two transmembrane proteins (GgtC and GgtD) and a solute-binding protein (GgtB).

It localises to the cell membrane. Its function is as follows. Part of the ABC transporter complex GgtABCD involved in the uptake of the osmoprotective compounds glucosylglycerol (GG), sucrose and trehalose. Responsible for the translocation of the substrate across the membrane. In Synechocystis sp. (strain ATCC 27184 / PCC 6803 / Kazusa), this protein is Osmoprotective compounds uptake permease protein GgtD.